Reading from the N-terminus, the 480-residue chain is Mannose-1-phosphate guanylyltransferase ManC (480 aa).

This sequence belongs to the mannose-6-phosphate isomerase type 2 family.

It carries out the reaction alpha-D-mannose 1-phosphate + GTP + H(+) = GDP-alpha-D-mannose + diphosphate. The protein operates within nucleotide-sugar biosynthesis; GDP-alpha-D-mannose biosynthesis; GDP-alpha-D-mannose from alpha-D-mannose 1-phosphate (GTP route): step 1/1. In terms of biological role, involved in the biosynthesis of the capsular polysaccharide colanic acid. This chain is Mannose-1-phosphate guanylyltransferase ManC (manC), found in Salmonella typhimurium (strain LT2 / SGSC1412 / ATCC 700720).